A 193-amino-acid polypeptide reads, in one-letter code: Zinc finger CCHC domain-containing protein 17 (193 aa).

The S1 motif; truncated domain maps to 1 to 40 (MSSCRVDKPSEIVDVGDKVWVKLIGREMKNDRIKVSLSMK). S66 is modified (phosphoserine). The segment at 83-100 (TTCKKCGCKGHFAKDCFM) adopts a CCHC-type zinc-finger fold. At K96 the chain carries N6-acetyllysine. Residues 113–193 (EEEEKEEAKS…KKKHKKKHKE (81 aa)) are disordered. Basic and acidic residues predominate over residues 118-129 (EEAKSAEFEKPV). Residues 134–150 (PSRKRKKEKKKKKHRDR) are compositionally biased toward basic residues. Phosphoserine is present on S135. Residues 163–177 (DTGKRARHTSKDSKA) are compositionally biased toward basic and acidic residues. Residues 178 to 193 (AKKKKKKKKHKKKHKE) show a composition bias toward basic residues.

In terms of assembly, may interact with PNN. May associate with the 60 S ribosomal subunit.

It localises to the nucleus. Its subcellular location is the nucleolus. The sequence is that of Zinc finger CCHC domain-containing protein 17 (ZCCHC17) from Macaca fascicularis (Crab-eating macaque).